The chain runs to 80 residues: Exodeoxyribonuclease 7 small subunit (80 aa).

Belongs to the XseB family. In terms of assembly, heterooligomer composed of large and small subunits.

Its subcellular location is the cytoplasm. The catalysed reaction is Exonucleolytic cleavage in either 5'- to 3'- or 3'- to 5'-direction to yield nucleoside 5'-phosphates.. Its function is as follows. Bidirectionally degrades single-stranded DNA into large acid-insoluble oligonucleotides, which are then degraded further into small acid-soluble oligonucleotides. In Aliivibrio salmonicida (strain LFI1238) (Vibrio salmonicida (strain LFI1238)), this protein is Exodeoxyribonuclease 7 small subunit.